We begin with the raw amino-acid sequence, 1296 residues long: Probable serine/threonine protein kinase IREH1 (1296 aa).

Disordered regions lie at residues 1 to 274, 457 to 480, and 524 to 553; these read MVFK…SESP, SGAGRSYSAAKVPSTKKAYSQEQH, and SPALKTVKEAPASEEQNDSKVEPPNIVGSR. A compositionally biased stretch (low complexity) spans 10–32; that stretch reads SSKKSGSSSPDSSNSPRSVGSNS. Position 32 is a phosphoserine (Ser-32). Basic and acidic residues-rich tracts occupy residues 68–77, 101–112, and 178–208; these read DGLKKKDGSS, EVKKPPPPEVKE, and RKKEAGSSKLGLEENMDRTRPSDNKSDRDSL. A compositionally biased stretch (low complexity) spans 214-249; that stretch reads PPRSLSPTLPPSGSRLQNVASSSGTGRSEMSSGRSG. The segment at 602-621 adopts a C2H2-type; atypical zinc-finger fold; that stretch reads CRICEEEVPTTHVEDHSRVC. The segment at 724-750 is disordered; the sequence is FGPKSDQGMTTSSASSMTPRSPIPTPR. The segment covering 730 to 740 has biased composition (polar residues); that stretch reads QGMTTSSASSM. Residues 882-1171 form the Protein kinase domain; it reads FEIIKPISRG…AAEVKQHIFF (290 aa). ATP-binding positions include 888–896 and Lys-911; that span reads ISRGAFGRV. Asp-1005 (proton acceptor) is an active-site residue. Ser-1070 is subject to Phosphoserine. The region spanning 1172–1277 is the AGC-kinase C-terminal domain; the sequence is KDINWDTLAR…KNLSQLASIN (106 aa). Residues 1214–1245 are disordered; it reads PSGEVPDYSDADSMTNSSGCSSNHHEEGEAEE. Polar residues predominate over residues 1225–1235; it reads DSMTNSSGCSS. Over residues 1236-1245 the composition is skewed to basic and acidic residues; sequence NHHEEGEAEE.

Belongs to the protein kinase superfamily. AGC Ser/Thr protein kinase family.

It catalyses the reaction L-seryl-[protein] + ATP = O-phospho-L-seryl-[protein] + ADP + H(+). It carries out the reaction L-threonyl-[protein] + ATP = O-phospho-L-threonyl-[protein] + ADP + H(+). Its function is as follows. May be involved in root hair elongation. The chain is Probable serine/threonine protein kinase IREH1 from Arabidopsis thaliana (Mouse-ear cress).